The sequence spans 273 residues: DnaJ homolog subfamily C member 27 (273 aa).

The required for interaction with MAPK1 stretch occupies residues 1-18 (MEANMPKRKEPGRSLRIK). GTP-binding positions include 23 to 30 (GNAEVGKS), 71 to 75 (DMAGH), and 134 to 137 (NKID). Residues 217–273 (GSWDMLGVKPGASRDEVNKACRKLAVLLHPDKCVAPGSEDAFKAVVNARTALLKNIK) form the J domain.

The protein belongs to the small GTPase superfamily. Rab family. Interacts directly with MAPK1 (wild-type and kinase-deficient forms). Interacts directly (in GTP-bound form) with MAP2K1 (wild-type and kinase-deficient forms).

Its subcellular location is the nucleus. GTPase which can activate the MEK/ERK pathway and induce cell transformation when overexpressed. May act as a nuclear scaffold for MAPK1, probably by association with MAPK1 nuclear export signal leading to enhanced ERK1/ERK2 signaling. This chain is DnaJ homolog subfamily C member 27 (DNAJC27), found in Pongo abelii (Sumatran orangutan).